Here is a 723-residue protein sequence, read N- to C-terminus: PX domain-containing protein EREL1 (723 aa).

A compositionally biased stretch (basic residues) spans 1–12 (MMQRRSPPKHRH). Residues 1–26 (MMQRRSPPKHRHDGTSPLPLGMDWSP) are disordered. The 118-residue stretch at 48-165 (YCVTIPSWIV…SFLELEAAAR (118 aa)) folds into the PX domain. 2 disordered regions span residues 169-193 (QDVD…MVHP) and 209-230 (YGSD…QDDI). The segment covering 172-193 (DQNASDSNNDRSSTSSSPMVHP) has biased composition (low complexity). Over residues 209-225 (YGSDTAYETSEVGSPSV) the composition is skewed to polar residues. Coiled-coil stretches lie at residues 401 to 474 (NERL…LRQK) and 503 to 555 (KHVL…LEKE). Residues 698-723 (DVKTTEDVNEENSDEKDEASRETLKR) form a disordered region. Over residues 704 to 714 (DVNEENSDEKD) the composition is skewed to acidic residues.

The protein localises to the cytoplasm. It is found in the cytosol. The protein resides in the endosome membrane. Functionally, acts as an effector of RABF2A and RABF2B. Involved in vacuolar transport of storage proteins. Regulates membrane trafficking to protein storage vacuoles (PSVs). Binds specifically to phosphatidylinositol 3-monophosphate (PtdIns3P). In Arabidopsis thaliana (Mouse-ear cress), this protein is PX domain-containing protein EREL1.